Consider the following 319-residue polypeptide: Probable arabinan endo-1,5-alpha-L-arabinosidase A (319 aa).

Positions methionine 1–glycine 19 are cleaved as a signal peptide. Aspartate 34 serves as the catalytic Proton acceptor. Asparagine 53 carries N-linked (GlcNAc...) asparagine glycosylation. The Proton donor role is filled by glutamate 198.

Belongs to the glycosyl hydrolase 43 family.

Its subcellular location is the secreted. It carries out the reaction Endohydrolysis of (1-&gt;5)-alpha-arabinofuranosidic linkages in (1-&gt;5)-arabinans.. The protein operates within glycan metabolism; L-arabinan degradation. In terms of biological role, endo-1,5-alpha-L-arabinanase involved in degradation of pectin. Its preferred substrate is linear 1,5-alpha-L-arabinan. The chain is Probable arabinan endo-1,5-alpha-L-arabinosidase A (abnA) from Aspergillus flavus (strain ATCC 200026 / FGSC A1120 / IAM 13836 / NRRL 3357 / JCM 12722 / SRRC 167).